Reading from the N-terminus, the 592-residue chain is Bifunctional purine biosynthesis protein ATIC (592 aa).

The residue at position 1 (methionine 1) is an N-acetylmethionine. The 146-residue stretch at 1–146 folds into the MGS-like domain; that stretch reads MAPSQLALFS…KNHARVTVVC (146 aa). The interval 1-198 is IMP cyclohydrolase; the sequence is MAPSQLALFS…ISDYFRKQYS (198 aa). IMP contacts are provided by residues 12-14, 34-37, 64-67, 101-102, and 125-126; these read SDK, SGGT, RVKT, CN, and DI. The Proton donor/acceptor; for FAICAR cyclization activity role is filled by lysine 137. Position 199 is an N6-acetyllysine (lysine 199). The interval 199 to 592 is AICAR formyltransferase; the sequence is KGISQMPLRY…AHTDLRLFHH (394 aa). 5-amino-1-(5-phospho-beta-D-ribosyl)imidazole-4-carboxamide is bound by residues 207–208, histidine 267, glycine 316, aspartate 339, asparagine 431, and arginine 451; that span reads RY. The active-site Proton acceptor; for AICAR formyltransferase activity is histidine 267. Isoleucine 452 is a binding site for (6R)-10-formyltetrahydrofolate. 5-amino-1-(5-phospho-beta-D-ribosyl)imidazole-4-carboxamide is bound at residue phenylalanine 541. (6R)-10-formyltetrahydrofolate contacts are provided by residues aspartate 546 and 565–566; that span reads ST. Residue arginine 588 coordinates 5-amino-1-(5-phospho-beta-D-ribosyl)imidazole-4-carboxamide.

The protein belongs to the PurH family. Homodimer. Associates with internalized INSR complexes on Golgi/endosomal membranes. Interacts with INSR; ATIC together with PRKAA2/AMPK2 and HACD3/PTPLAD1 is proposed to be part of a signaling network regulating INSR autophosphorylation and endocytosis.

It localises to the cytoplasm. The protein resides in the cytosol. It carries out the reaction (6R)-10-formyltetrahydrofolate + 5-amino-1-(5-phospho-beta-D-ribosyl)imidazole-4-carboxamide = 5-formamido-1-(5-phospho-D-ribosyl)imidazole-4-carboxamide + (6S)-5,6,7,8-tetrahydrofolate. The enzyme catalyses 10-formyldihydrofolate + 5-amino-1-(5-phospho-beta-D-ribosyl)imidazole-4-carboxamide = 5-formamido-1-(5-phospho-D-ribosyl)imidazole-4-carboxamide + 7,8-dihydrofolate. The catalysed reaction is IMP + H2O = 5-formamido-1-(5-phospho-D-ribosyl)imidazole-4-carboxamide. Its pathway is purine metabolism; IMP biosynthesis via de novo pathway; 5-formamido-1-(5-phospho-D-ribosyl)imidazole-4-carboxamide from 5-amino-1-(5-phospho-D-ribosyl)imidazole-4-carboxamide (10-formyl THF route): step 1/1. It participates in purine metabolism; IMP biosynthesis via de novo pathway; IMP from 5-formamido-1-(5-phospho-D-ribosyl)imidazole-4-carboxamide: step 1/1. Its activity is regulated as follows. AMP and XMP inhibit AICAR formyltransferase activity. AICAR formyltransferase activity is inhibited by N-(6-fluoro-1-oxo-1,2-dihydroisoquinolin-7-yl)-5- [(3R)-3-hydroxypyrrolidin-1-yl]thiophene-2-sulfonamide (LSN 3213128), which acts as a tumor suppression in cancer cell lines. Its function is as follows. Bifunctional enzyme that catalyzes the last two steps of purine biosynthesis. Acts as a transformylase that incorporates a formyl group to the AMP analog AICAR (5-amino-1-(5-phospho-beta-D-ribosyl)imidazole-4-carboxamide) to produce the intermediate formyl-AICAR (FAICAR). Also displays cyclohydrolase activity involving the cyclization of FAICAR to inosine monophosphate (IMP). Can use both 10-formyldihydrofolate and 10-formyltetrahydrofolate as the formyl donor in this reaction. Also catalyzes the cyclization of FAICAR to IMP. Promotes insulin receptor/INSR autophosphorylation and is involved in INSR internalization. The sequence is that of Bifunctional purine biosynthesis protein ATIC (Atic) from Mus musculus (Mouse).